Consider the following 61-residue polypeptide: MESTSIILRYYVAVYPPPFFKYTLSRFIKLKNAFKLLIIKLKKQIMIYREVLNTYIIQWIV.

This is an uncharacterized protein from Fowlpox virus (strain NVSL) (FPV).